The following is a 696-amino-acid chain: Glycine--tRNA ligase beta subunit (696 aa).

It belongs to the class-II aminoacyl-tRNA synthetase family. In terms of assembly, tetramer of two alpha and two beta subunits.

The protein resides in the cytoplasm. The catalysed reaction is tRNA(Gly) + glycine + ATP = glycyl-tRNA(Gly) + AMP + diphosphate. This is Glycine--tRNA ligase beta subunit from Nitratidesulfovibrio vulgaris (strain DP4) (Desulfovibrio vulgaris).